Reading from the N-terminus, the 100-residue chain is Small ribosomal subunit protein uS14 (100 aa).

Belongs to the universal ribosomal protein uS14 family. Part of the 30S ribosomal subunit. Contacts proteins S3 and S10.

In terms of biological role, binds 16S rRNA, required for the assembly of 30S particles and may also be responsible for determining the conformation of the 16S rRNA at the A site. The polypeptide is Small ribosomal subunit protein uS14 (Prochlorococcus marinus (strain MIT 9211)).